Consider the following 452-residue polypeptide: tRNA modification GTPase MnmE (452 aa).

Positions 25, 81, and 120 each coordinate (6S)-5-formyl-5,6,7,8-tetrahydrofolate. Residues 216–375 enclose the TrmE-type G domain; it reads GITVVIAGEP…LKNHLKNTAG (160 aa). K(+) is bound at residue asparagine 226. GTP-binding positions include 226 to 231, 245 to 251, and 270 to 273; these read NVGKSS, TDIAGTT, and DTAG. Serine 230 provides a ligand contact to Mg(2+). Residues threonine 245, isoleucine 247, and threonine 250 each coordinate K(+). Threonine 251 contributes to the Mg(2+) binding site. (6S)-5-formyl-5,6,7,8-tetrahydrofolate is bound at residue lysine 452.

It belongs to the TRAFAC class TrmE-Era-EngA-EngB-Septin-like GTPase superfamily. TrmE GTPase family. In terms of assembly, homodimer. Heterotetramer of two MnmE and two MnmG subunits. K(+) is required as a cofactor.

The protein resides in the cytoplasm. Functionally, exhibits a very high intrinsic GTPase hydrolysis rate. Involved in the addition of a carboxymethylaminomethyl (cmnm) group at the wobble position (U34) of certain tRNAs, forming tRNA-cmnm(5)s(2)U34. The polypeptide is tRNA modification GTPase MnmE (Coxiella burnetii (strain Dugway 5J108-111)).